The following is a 252-amino-acid chain: MQIFHNLNEWIRFRNSLSPDLSLGFAPTMGNLHAGHASLFLASSKENHYTVSSLFVNPTQFNNPDDYKHYPRTVDADLELMTQNGVDFCILPNENEIYADGYAYQVQENRFGQLMEGKHRPGHFNGVLTIVMKLFNLVKPTRAYFGEKDYQQLLLIQGMVKALFMDIEIKSCPTVREKSGLACSSRNNRLTPSQREIADEFAKIFHQNKSSAMISKELEALGITVEYIEEFQGRRFAAVKIGDIRLIDNYLL.

Position 29 to 36 (29 to 36) interacts with ATP; sequence MGNLHAGH. The active-site Proton donor is His-36. Gln-60 is a binding site for (R)-pantoate. Gln-60 serves as a coordination point for beta-alanine. 146–149 contributes to the ATP binding site; sequence GEKD. Gln-152 provides a ligand contact to (R)-pantoate. ATP is bound by residues Val-175 and 183–186; that span reads CSSR.

It belongs to the pantothenate synthetase family. Homodimer.

The protein resides in the cytoplasm. It catalyses the reaction (R)-pantoate + beta-alanine + ATP = (R)-pantothenate + AMP + diphosphate + H(+). It functions in the pathway cofactor biosynthesis; (R)-pantothenate biosynthesis; (R)-pantothenate from (R)-pantoate and beta-alanine: step 1/1. In terms of biological role, catalyzes the condensation of pantoate with beta-alanine in an ATP-dependent reaction via a pantoyl-adenylate intermediate. This is Pantothenate synthetase from Legionella pneumophila (strain Lens).